We begin with the raw amino-acid sequence, 247 residues long: MNVIPCSINTLKGLYDISGVEVGQHLYWQIGGLQVHAQVLITSWVVIAILLGSVTLAVRNPQTIPADGQNFFEYLLEFIRDLSKTQIGEEYGPWVPFIGTMFLFIFVSNWSGALLPWKIIQLPHGELAAPTNDINTTVALALLTSVAYFYAGLSKKGLSYFGKYIQPTPILLPINILEDFTKPLSLSFRLFGNILADELVVVVLVSLVPLVVPIPVMFLGLFTSGIQALIFATLAAAYIGESMEGHH.

5 helical membrane passes run 38 to 58 (QVLI…TLAV), 95 to 115 (VPFI…GALL), 134 to 154 (INTT…AGLS), 199 to 219 (LVVV…VMFL), and 220 to 240 (GLFT…AYIG).

The protein belongs to the ATPase A chain family. F-type ATPases have 2 components, CF(1) - the catalytic core - and CF(0) - the membrane proton channel. CF(1) has five subunits: alpha(3), beta(3), gamma(1), delta(1), epsilon(1). CF(0) has four main subunits: a, b, b' and c.

The protein resides in the plastid. It localises to the chloroplast thylakoid membrane. Key component of the proton channel; it plays a direct role in the translocation of protons across the membrane. The chain is ATP synthase subunit a, chloroplastic from Lemna minor (Common duckweed).